Consider the following 152-residue polypeptide: Deoxyuridine 5'-triphosphate nucleotidohydrolase (152 aa).

Substrate contacts are provided by residues 72 to 74 (RSG), N85, and 89 to 91 (TVD).

Belongs to the dUTPase family. It depends on Mg(2+) as a cofactor.

The catalysed reaction is dUTP + H2O = dUMP + diphosphate + H(+). Its pathway is pyrimidine metabolism; dUMP biosynthesis; dUMP from dCTP (dUTP route): step 2/2. In terms of biological role, this enzyme is involved in nucleotide metabolism: it produces dUMP, the immediate precursor of thymidine nucleotides and it decreases the intracellular concentration of dUTP so that uracil cannot be incorporated into DNA. The chain is Deoxyuridine 5'-triphosphate nucleotidohydrolase from Nitrobacter winogradskyi (strain ATCC 25391 / DSM 10237 / CIP 104748 / NCIMB 11846 / Nb-255).